The sequence spans 276 residues: Large ribosomal subunit protein uL2 (276 aa).

Disordered stretches follow at residues 1–61 and 224–276; these read MALK…HKQK and AMNP…KKKN. Over residues 15 to 31 the composition is skewed to basic and acidic residues; it reads GRIDLRKDEITAQKPEK.

It belongs to the universal ribosomal protein uL2 family. As to quaternary structure, part of the 50S ribosomal subunit. Forms a bridge to the 30S subunit in the 70S ribosome.

In terms of biological role, one of the primary rRNA binding proteins. Required for association of the 30S and 50S subunits to form the 70S ribosome, for tRNA binding and peptide bond formation. It has been suggested to have peptidyltransferase activity; this is somewhat controversial. Makes several contacts with the 16S rRNA in the 70S ribosome. The chain is Large ribosomal subunit protein uL2 from Treponema denticola (strain ATCC 35405 / DSM 14222 / CIP 103919 / JCM 8153 / KCTC 15104).